The chain runs to 451 residues: Nicotinamide phosphoribosyltransferase (451 aa).

Arginine 209 serves as a coordination point for diphosphate. Position 232 (aspartate 232) interacts with beta-nicotinamide D-ribonucleotide. 2 residues coordinate diphosphate: histidine 248 and arginine 309. Beta-nicotinamide D-ribonucleotide contacts are provided by residues 309–311, 364–365, and arginine 403; these read RPD and GD.

The protein belongs to the NAPRTase family.

The enzyme catalyses beta-nicotinamide D-ribonucleotide + diphosphate = 5-phospho-alpha-D-ribose 1-diphosphate + nicotinamide + H(+). It functions in the pathway cofactor biosynthesis; NAD(+) biosynthesis; nicotinamide D-ribonucleotide from 5-phospho-alpha-D-ribose 1-diphosphate and nicotinamide: step 1/1. Its function is as follows. Catalyzes the condensation of nicotinamide with 5-phosphoribosyl-1-pyrophosphate to yield nicotinamide mononucleotide, an intermediate in the biosynthesis of NAD. The polypeptide is Nicotinamide phosphoribosyltransferase (Mycoplasma pneumoniae (strain ATCC 29342 / M129 / Subtype 1) (Mycoplasmoides pneumoniae)).